The following is a 479-amino-acid chain: Arf-GAP domain and FG repeat-containing protein 2 (479 aa).

The 127-residue stretch at 27–153 folds into the Arf-GAP domain; the sequence is EVWCRRVREL…WYVPPEQVKG (127 aa). The C4-type zinc-finger motif lies at 47–70; it reads CFECAQRGVTYVDITVGSFVCTTC. 2 disordered regions span residues 150–223 and 450–479; these read QVKG…TKKA and LSQPAGISTNPFMTGSSAFASKPPTTNPFL. Polar residues predominate over residues 157–167; that stretch reads SKGSVSATPVQ. Residue K174 is modified to N6-acetyllysine. Residues 194–218 show a composition bias toward low complexity; that stretch reads SSQPGSQSQARSSSQARSSQPPSHS. Polar residues predominate over residues 454 to 479; the sequence is AGISTNPFMTGSSAFASKPPTTNPFL.

Interacts with EPS15R.

The polypeptide is Arf-GAP domain and FG repeat-containing protein 2 (Agfg2) (Mus musculus (Mouse)).